The sequence spans 103 residues: Large ribosomal subunit protein bL21 (103 aa).

This sequence belongs to the bacterial ribosomal protein bL21 family. In terms of assembly, part of the 50S ribosomal subunit. Contacts protein L20.

Functionally, this protein binds to 23S rRNA in the presence of protein L20. This chain is Large ribosomal subunit protein bL21, found in Polaromonas sp. (strain JS666 / ATCC BAA-500).